The primary structure comprises 656 residues: MVNEARGNDSLNPCLEGSASSSSESSKDSSRCSTPGLDPERHERLRDKMRRRMESGDKWFSLEFFPPRTAEGAVNLISRFDRMAAGGPLFIDVTWHPAGDPGSDKETSSMMIASTAVNYCGLETILHMTCCCQRLEEITGHLHKAKQLGLKNIMALRGDPIGDQWEEEEGGFNYAVDLVKHIRSEFGDYFDLCVAGYPKGHPEAGSFEADLKHLKEKVSAGADFIITQLFFEADTFFRFVKACTDMGITCPIVPGIFPIQGYHSLRQLVKQSKLEVPQEIKDVIEPIKDNDAAIRNYGIELAVSLCHELLASGLVPGLHFYTLNREMATTEVLKRLGMWTEDPRRPLPWALSAHPKRREEDVRPIFWASRPKSYIYRTQEWDEFPNGRWGNSSSPAFGELKDYYLFYLKSKSPRELLLKMWGEELTSEESVFEVFVLYLSGEPNRNGHKVTCLPWNDEPLAAETSLLKEELLRVNRQGILTINSQPNINGKPSSDPVVGWGPSGGYVFQKAYLEFFTSRETAEALLQVLKKYELRVNYHLVNVKGENITNAPELQPNAVTWGIFPGREIIQPTVVDPISFMFWKDEAFALWIEQWGKLYEEESPSRTIIQYIHDNYFLVNLVDNDFPLDNCLWQVVEDALELLNRPTQNEREMEAP.

A disordered region spans residues 1–46 (MVNEARGNDSLNPCLEGSASSSSESSKDSSRCSTPGLDPERHERLR). 9 positions are modified to phosphoserine: S10, S18, S20, S21, S23, S25, S26, S29, and S30. The residue at position 34 (T34) is a Phosphothreonine. Catalysis depends on E63, which acts as the Proton donor/acceptor. Residues 63-68 (EFFPPR) and 94-95 (TW) contribute to the NAD(+) site. Position 94 is a phosphothreonine (T94). An FAD-binding site is contributed by 94–95 (TW). S103 bears the Phosphoserine mark. Residues H127, 157–159 (RGD), 174–175 (YA), Y197, 201–204 (HPEA), D210, and K217 each bind FAD. Substrate is bound at residue D159. The substrate site is built by Q228, Y321, and R325. A Phosphoserine modification is found at S394. T451 is subject to Phosphothreonine. S-adenosyl-L-methionine contacts are provided by residues N456, 461–464 (AAET), 481–485 (TINSQ), T560, and T573.

It belongs to the methylenetetrahydrofolate reductase family. As to quaternary structure, homodimer. Requires FAD as cofactor. Phosphorylation of an N-terminal serine-rich phosphorylation region increases sensitivity to S-adenosylmethionine and inhibition.

The enzyme catalyses (6S)-5-methyl-5,6,7,8-tetrahydrofolate + NADP(+) = (6R)-5,10-methylene-5,6,7,8-tetrahydrofolate + NADPH + H(+). It functions in the pathway one-carbon metabolism; tetrahydrofolate interconversion. Allosterically regulated by S-adenosylmethionine (SAM). Its function is as follows. Catalyzes the conversion of 5,10-methylenetetrahydrofolate to 5-methyltetrahydrofolate, a cosubstrate for homocysteine remethylation to methionine. Represents a key regulatory connection between the folate and methionine cycles. This is Methylenetetrahydrofolate reductase (NADPH) (MTHFR) from Macaca fascicularis (Crab-eating macaque).